We begin with the raw amino-acid sequence, 409 residues long: Phospho-N-acetylmuramoyl-pentapeptide-transferase (409 aa).

Transmembrane regions (helical) follow at residues 23–43, 73–93, 95–115, 132–152, 214–234, 247–267, 279–299, 305–325, 331–351, and 386–406; these read YITF…TIFG, TPTM…LLLA, LNNI…AIGF, GIFK…TLYF, YAWL…SNGA, TSAI…NVIF, SGEM…FLWY, AVFM…VLAI, MLIP…VLQV, and KIVT…IVTL.

It belongs to the glycosyltransferase 4 family. MraY subfamily. Mg(2+) serves as cofactor.

Its subcellular location is the cell inner membrane. The catalysed reaction is UDP-N-acetyl-alpha-D-muramoyl-L-alanyl-gamma-D-glutamyl-meso-2,6-diaminopimeloyl-D-alanyl-D-alanine + di-trans,octa-cis-undecaprenyl phosphate = di-trans,octa-cis-undecaprenyl diphospho-N-acetyl-alpha-D-muramoyl-L-alanyl-D-glutamyl-meso-2,6-diaminopimeloyl-D-alanyl-D-alanine + UMP. It participates in cell wall biogenesis; peptidoglycan biosynthesis. In terms of biological role, catalyzes the initial step of the lipid cycle reactions in the biosynthesis of the cell wall peptidoglycan: transfers peptidoglycan precursor phospho-MurNAc-pentapeptide from UDP-MurNAc-pentapeptide onto the lipid carrier undecaprenyl phosphate, yielding undecaprenyl-pyrophosphoryl-MurNAc-pentapeptide, known as lipid I. This is Phospho-N-acetylmuramoyl-pentapeptide-transferase from Flavobacterium psychrophilum (strain ATCC 49511 / DSM 21280 / CIP 103535 / JIP02/86).